The primary structure comprises 520 residues: GMP synthase [glutamine-hydrolyzing] (520 aa).

In terms of domain architecture, Glutamine amidotransferase type-1 spans 9–202 (RVLIVDFGSQ…LFNIAGLKGD (194 aa)). The active-site Nucleophile is cysteine 86. Catalysis depends on residues histidine 176 and glutamate 178. One can recognise a GMPS ATP-PPase domain in the interval 203–395 (WTMAAFRQEM…LGLAPAFVGR (193 aa)). 230 to 236 (SGGVDSS) lines the ATP pocket.

Homodimer.

It carries out the reaction XMP + L-glutamine + ATP + H2O = GMP + L-glutamate + AMP + diphosphate + 2 H(+). The protein operates within purine metabolism; GMP biosynthesis; GMP from XMP (L-Gln route): step 1/1. In terms of biological role, catalyzes the synthesis of GMP from XMP. This chain is GMP synthase [glutamine-hydrolyzing], found in Caulobacter vibrioides (strain ATCC 19089 / CIP 103742 / CB 15) (Caulobacter crescentus).